The sequence spans 53 residues: Photoreceptor disk component PRCD (53 aa).

The S-palmitoyl cysteine moiety is linked to residue Cys2. The disordered stretch occupies residues 24–53 (PEPSRVDGTVVGSGSDTDLQSTGREKGPVK). Over residues 35–45 (GSGSDTDLQST) the composition is skewed to polar residues.

The protein belongs to the PRCD family. As to quaternary structure, interacts with RHO/rhodopsin; the interaction promotes PRCD stability. Post-translationally, palmitoylated at Cys-2. Palmitoylation is essential for protein stability and trafficking to the photoreceptor outer segment, but does not appear to be essential for membrane localization. Probably palmitoylated by ZDHHC3. Phosphorylated. In terms of tissue distribution, expressed in retina, where it localizes to both rod and cone photoreceptors (at protein level).

The protein resides in the cell projection. The protein localises to the cilium. It localises to the photoreceptor outer segment. Its subcellular location is the membrane. It is found in the endoplasmic reticulum. The protein resides in the golgi apparatus. In terms of biological role, involved in vision. The polypeptide is Photoreceptor disk component PRCD (Mus musculus (Mouse)).